A 340-amino-acid polypeptide reads, in one-letter code: UDP-N-acetylglucosamine--N-acetylmuramyl-(pentapeptide) pyrophosphoryl-undecaprenol N-acetylglucosamine transferase (340 aa).

Residues 15-17 (TGG), Asn127, Ser184, Ile230, and Gln275 contribute to the UDP-N-acetyl-alpha-D-glucosamine site.

It belongs to the glycosyltransferase 28 family. MurG subfamily.

It is found in the cell inner membrane. The enzyme catalyses di-trans,octa-cis-undecaprenyl diphospho-N-acetyl-alpha-D-muramoyl-L-alanyl-D-glutamyl-meso-2,6-diaminopimeloyl-D-alanyl-D-alanine + UDP-N-acetyl-alpha-D-glucosamine = di-trans,octa-cis-undecaprenyl diphospho-[N-acetyl-alpha-D-glucosaminyl-(1-&gt;4)]-N-acetyl-alpha-D-muramoyl-L-alanyl-D-glutamyl-meso-2,6-diaminopimeloyl-D-alanyl-D-alanine + UDP + H(+). The protein operates within cell wall biogenesis; peptidoglycan biosynthesis. In terms of biological role, cell wall formation. Catalyzes the transfer of a GlcNAc subunit on undecaprenyl-pyrophosphoryl-MurNAc-pentapeptide (lipid intermediate I) to form undecaprenyl-pyrophosphoryl-MurNAc-(pentapeptide)GlcNAc (lipid intermediate II). The protein is UDP-N-acetylglucosamine--N-acetylmuramyl-(pentapeptide) pyrophosphoryl-undecaprenol N-acetylglucosamine transferase of Vesicomyosocius okutanii subsp. Calyptogena okutanii (strain HA).